A 145-amino-acid chain; its full sequence is Transcription antitermination protein NusB (145 aa).

It belongs to the NusB family.

In terms of biological role, involved in transcription antitermination. Required for transcription of ribosomal RNA (rRNA) genes. Binds specifically to the boxA antiterminator sequence of the ribosomal RNA (rrn) operons. This chain is Transcription antitermination protein NusB, found in Citrifermentans bemidjiense (strain ATCC BAA-1014 / DSM 16622 / JCM 12645 / Bem) (Geobacter bemidjiensis).